We begin with the raw amino-acid sequence, 121 residues long: Small ribosomal subunit protein uS13 (121 aa).

The interval 91–121 (HRRGLPVRGQKTKNNARTRKGPVKTVANKKK) is disordered.

It belongs to the universal ribosomal protein uS13 family. In terms of assembly, part of the 30S ribosomal subunit. Forms a loose heterodimer with protein S19. Forms two bridges to the 50S subunit in the 70S ribosome.

Located at the top of the head of the 30S subunit, it contacts several helices of the 16S rRNA. In the 70S ribosome it contacts the 23S rRNA (bridge B1a) and protein L5 of the 50S subunit (bridge B1b), connecting the 2 subunits; these bridges are implicated in subunit movement. Contacts the tRNAs in the A and P-sites. The protein is Small ribosomal subunit protein uS13 of Staphylococcus aureus (strain Mu3 / ATCC 700698).